A 244-amino-acid chain; its full sequence is Claudin-12 (244 aa).

Topologically, residues 1-10 (MGCRDVHAAT) are cytoplasmic. Residues 11–31 (VLSFLCGIASVAGLFAGTLLP) traverse the membrane as a helical segment. The Extracellular portion of the chain corresponds to 32-87 (NWRKLRLITFNRNEKNLTVYTGLWVKCARYDGSSDCLMYDTTWYSSVDQLDLRVLQ). A helical transmembrane segment spans residues 88 to 108 (FALPLSMLIAMGALLLCLIGM). At 109–135 (CNTAFRSSVPNIKLAKCLVNSAGCHLV) the chain is on the cytoplasmic side. Residues 136–156 (AGLLFFLAGTVSLSPSIWVIF) form a helical membrane-spanning segment. At 157–174 (YNIHLNKKFEPVFSFDYA) the chain is on the extracellular side. A helical transmembrane segment spans residues 175–195 (VYVTIASAGGLFMTSLILFIW). The Cytoplasmic segment spans residues 196–244 (YCTCKSLPSPFWQPLYSHPPSMHTYSQPYSARSRLSAIEIDIPVVSHTT). 2 positions are modified to phosphoserine: serine 228 and serine 231.

The protein belongs to the claudin family. As to quaternary structure, interacts with OCLN.

It is found in the cell junction. It localises to the tight junction. Its subcellular location is the cell membrane. Plays a major role in tight junction-specific obliteration of the intercellular space, through calcium-independent cell-adhesion activity. This is Claudin-12 (CLDN12) from Pongo abelii (Sumatran orangutan).